Reading from the N-terminus, the 173-residue chain is Disulfide bond formation protein B (173 aa).

The Cytoplasmic segment spans residues 1–11 (MNALQWSFRAQ). Residues 12–28 (CLTGFLFCTGLLAYAIF) form a helical membrane-spanning segment. Topologically, residues 29–46 (LQLHQGLEPCPLCIFQRI) are periplasmic. C38 and C41 are disulfide-bonded. Residues 47–63 (AFAVLGILFLIAGLYNS) traverse the membrane as a helical segment. The Cytoplasmic segment spans residues 64-70 (SNVYTRK). The chain crosses the membrane as a helical span at residues 71-88 (AYGLLIFLTAIIGTGIAG). The Periplasmic segment spans residues 89 to 145 (RHVWVQLMPHNTISSCGSPLSFLSETMGPFEVFRTVLTGTSNCGNIDWRFLGLSMPM). A disulfide bridge links C104 with C131. A helical transmembrane segment spans residues 146 to 164 (WSMFWFVALALLGLLVGFK). At 165-173 (AERRKPLFS) the chain is on the cytoplasmic side.

It belongs to the DsbB family.

It is found in the cell inner membrane. Its function is as follows. Required for disulfide bond formation in some periplasmic proteins. Acts by oxidizing the DsbA protein. This chain is Disulfide bond formation protein B, found in Xylella fastidiosa (strain Temecula1 / ATCC 700964).